The chain runs to 258 residues: Imidazole glycerol phosphate synthase subunit HisF (258 aa).

Active-site residues include Asp-11 and Asp-130.

This sequence belongs to the HisA/HisF family. In terms of assembly, heterodimer of HisH and HisF.

The protein resides in the cytoplasm. The enzyme catalyses 5-[(5-phospho-1-deoxy-D-ribulos-1-ylimino)methylamino]-1-(5-phospho-beta-D-ribosyl)imidazole-4-carboxamide + L-glutamine = D-erythro-1-(imidazol-4-yl)glycerol 3-phosphate + 5-amino-1-(5-phospho-beta-D-ribosyl)imidazole-4-carboxamide + L-glutamate + H(+). It participates in amino-acid biosynthesis; L-histidine biosynthesis; L-histidine from 5-phospho-alpha-D-ribose 1-diphosphate: step 5/9. Functionally, IGPS catalyzes the conversion of PRFAR and glutamine to IGP, AICAR and glutamate. The HisF subunit catalyzes the cyclization activity that produces IGP and AICAR from PRFAR using the ammonia provided by the HisH subunit. This Photorhabdus laumondii subsp. laumondii (strain DSM 15139 / CIP 105565 / TT01) (Photorhabdus luminescens subsp. laumondii) protein is Imidazole glycerol phosphate synthase subunit HisF.